The following is a 273-amino-acid chain: Dermonecrotic toxin LarSicTox-alphaIB1aii (273 aa).

Residue His-5 is part of the active site. Mg(2+) is bound by residues Glu-25 and Asp-27. His-41 (nucleophile) is an active-site residue. Intrachain disulfides connect Cys-45–Cys-51 and Cys-47–Cys-190. Asp-85 is a binding site for Mg(2+). Residue Asn-250 is glycosylated (N-linked (GlcNAc...) asparagine).

Belongs to the arthropod phospholipase D family. Class II subfamily. Mg(2+) serves as cofactor. Expressed by the venom gland.

It is found in the secreted. It catalyses the reaction an N-(acyl)-sphingosylphosphocholine = an N-(acyl)-sphingosyl-1,3-cyclic phosphate + choline. It carries out the reaction an N-(acyl)-sphingosylphosphoethanolamine = an N-(acyl)-sphingosyl-1,3-cyclic phosphate + ethanolamine. The enzyme catalyses a 1-acyl-sn-glycero-3-phosphocholine = a 1-acyl-sn-glycero-2,3-cyclic phosphate + choline. The catalysed reaction is a 1-acyl-sn-glycero-3-phosphoethanolamine = a 1-acyl-sn-glycero-2,3-cyclic phosphate + ethanolamine. Dermonecrotic toxins cleave the phosphodiester linkage between the phosphate and headgroup of certain phospholipids (sphingolipid and lysolipid substrates), forming an alcohol (often choline) and a cyclic phosphate. This toxin acts on sphingomyelin (SM). It may also act on ceramide phosphoethanolamine (CPE), lysophosphatidylcholine (LPC) and lysophosphatidylethanolamine (LPE), but not on lysophosphatidylserine (LPS), and lysophosphatidylglycerol (LPG). It acts by transphosphatidylation, releasing exclusively cyclic phosphate products as second products. Induces dermonecrosis, hemolysis, increased vascular permeability, edema, inflammatory response, and platelet aggregation. The chain is Dermonecrotic toxin LarSicTox-alphaIB1aii from Loxosceles arizonica (Arizona brown spider).